We begin with the raw amino-acid sequence, 755 residues long: uncharacterized protein (755 aa).

The next 9 membrane-spanning stretches (helical) occupy residues 46–66 (LGLGVGLASQLILLADMGGLY), 70–90 (LKTIFGAWVGAAIAMAVGTIV), 93–113 (GWGLGLAITGFVLFASGYLAV), 118–138 (GAMVGIVTTFAFLLGAQNVST), 143–163 (FTSLAIGGMWSLILAIFIWPF), 411–431 (IAHLTQIPYGFWIVITLIFVL), 446–466 (LLGTFLGVLVMSIALKLIQDP), 482–502 (ALLRFHYSVAVFFITAFALIL), and 514–534 (ALLSRLVCTLIGSAIALGLAF).

Belongs to the YccS/YhfK family.

The protein localises to the cell membrane. This is an uncharacterized protein from Synechocystis sp. (strain ATCC 27184 / PCC 6803 / Kazusa).